The following is a 214-amino-acid chain: Osteoclast-stimulating factor 1 (214 aa).

N-acetylserine is present on Ser-2. Positions 12-71 constitute an SH3 domain; sequence GQVKVFRALYTFEPRTPDELYFEEGDIIYITDMSDTNWWKGTCKGRTGLIPSNYVAEQAE. ANK repeat units follow at residues 72–101, 105–135, and 139–168; these read SIDN…GVNG, AGST…ELNQ, and LGDT…RTDL. 2 positions are modified to phosphoserine: Ser-202 and Ser-213.

Interacts with SRC and SMN1. Interacts with FASLG.

Its subcellular location is the cytoplasm. Induces bone resorption, acting probably through a signaling cascade which results in the secretion of factor(s) enhancing osteoclast formation and activity. In Bos taurus (Bovine), this protein is Osteoclast-stimulating factor 1 (OSTF1).